The chain runs to 325 residues: NADH-quinone oxidoreductase subunit H (325 aa).

The next 8 membrane-spanning stretches (helical) occupy residues 11 to 31 (ILLT…CGAF), 81 to 101 (VIFT…FAIV), 114 to 134 (IGIL…LFAG), 154 to 174 (LSYE…AGSF), 186 to 206 (VWNV…GVAV), 237 to 257 (FFVG…TLFF), 265 to 285 (LPPF…FILI), and 304 to 324 (ICLP…LWQA).

This sequence belongs to the complex I subunit 1 family. In terms of assembly, NDH-1 is composed of 13 different subunits. Subunits NuoA, H, J, K, L, M, N constitute the membrane sector of the complex.

It localises to the cell inner membrane. It carries out the reaction a quinone + NADH + 5 H(+)(in) = a quinol + NAD(+) + 4 H(+)(out). In terms of biological role, NDH-1 shuttles electrons from NADH, via FMN and iron-sulfur (Fe-S) centers, to quinones in the respiratory chain. The immediate electron acceptor for the enzyme in this species is believed to be ubiquinone. Couples the redox reaction to proton translocation (for every two electrons transferred, four hydrogen ions are translocated across the cytoplasmic membrane), and thus conserves the redox energy in a proton gradient. This subunit may bind ubiquinone. The polypeptide is NADH-quinone oxidoreductase subunit H (Shigella flexneri serotype 5b (strain 8401)).